Reading from the N-terminus, the 392-residue chain is Putative transactivator/viroplasmin protein (392 aa).

A coiled-coil region spans residues 1 to 88 (MEDMMKQILE…NVEEQYQWKN (88 aa)). The disordered stretch occupies residues 358-392 (EIEKEEPGEEKNLEDVSTDDNNEKKKIRSVIVKET).

The protein belongs to the caulimoviridae viroplasmin family.

It is found in the host cytoplasm. In terms of biological role, enhances the translation of downstream ORFs on polycistronic mRNAs derived from cassava vein mosaic virus. This chain is Putative transactivator/viroplasmin protein, found in Cassava vein mosaic virus (CsVMV).